Here is a 115-residue protein sequence, read N- to C-terminus: Large ribosomal subunit protein bL20c (115 aa).

This sequence belongs to the bacterial ribosomal protein bL20 family.

Its subcellular location is the plastid. The protein resides in the chloroplast. Its function is as follows. Binds directly to 23S ribosomal RNA and is necessary for the in vitro assembly process of the 50S ribosomal subunit. It is not involved in the protein synthesizing functions of that subunit. The chain is Large ribosomal subunit protein bL20c from Angiopteris evecta (Mule's foot fern).